A 362-amino-acid polypeptide reads, in one-letter code: 2-oxoglutarate-dependent dioxygenase lolO2 (362 aa).

In terms of domain architecture, Fe2OG dioxygenase spans 199 to 312 (TWNYFLGQPV…RYSLVFFGHL (114 aa)). His222, Asp224, and His280 together coordinate Fe cation. Residue Arg303 coordinates 2-oxoglutarate.

This sequence belongs to the iron/ascorbate-dependent oxidoreductase family. Requires Fe(2+) as cofactor.

It participates in alkaloid biosynthesis. Functionally, 2-oxoglutarate-dependent dioxygenase; part of the gene cluster that mediates the biosynthesis of loline alkaloids, potent insecticidal agents composed of a pyrrolizidine ring system and an uncommon ether bridge linking carbons 2 and 7. Lolines are structurally differentiated by the various modifications of the L-amino group and include norloline, loline, N-methylloline, N-acetylloline, N-acetylnorloline, and N-formylloline. The first committed step is the condensation of O-acetyl-L-homoserine (derived from L-aspartic acid) and L-proline, probably catalyzed by the gamma-type pyridoxal 5'-phosphate(PLP)-dependent enzyme lolC, to give the diamino diacid, NACPP. Ensuing cyclization, decarboxylation, and acetylation steps yield 1-exo-acetamidopyrrolizidine (AcAP). LolO is required for installation of the ether bridge upon the pathway intermediate, 1-exo-acetamidopyrrolizidine (AcAP). In sequential 2-oxoglutarate- and O(2)-consuming steps, lolO removes hydrogens from C2 and C7 of AcAP to form both carbon-oxygen bonds in N-acetylnorloline (NANL), the precursor to all other lolines. The enzymes lolD, lolE, lolF and lolT have also been proposed to be involved in the ether-bridge installation. Further processing of the exocyclic moiety of NANL by fungal N-acetamidase (LolN), methyltransferase (LolM), and cytochrome P450 (LolP) enzymes, with occasional involvement of a plant acetyltransferase, generates the other known lolines. LolN transforms NANL to norlonine which is monomethylated and dimethylated to respectively lonine and N-methyllonine (NML) by lolM. LolP catalyzes hydroxylation of the methyl group in N-methylloline (NML) and further oxygenation to N-formylloline (NFL). A plant acetyltransferase is responsible for the acetylation of loline to form N-acetylloline (NAL). LolA might interact with aspartate kinase to prevent feedback inhibition of its activity by these end products and thereby promote production of L-homoserine from L-aspartate. The protein is 2-oxoglutarate-dependent dioxygenase lolO2 of Epichloe uncinata (Endophyte fungus).